A 655-amino-acid chain; its full sequence is p-hydroxybenzoic acid efflux pump subunit AaeB (655 aa).

Topologically, residues 1-12 (MGIFSIANQHIR) are periplasmic. A helical membrane pass occupies residues 13–33 (FAVKLATAIVLALFVGFHFQL). The Cytoplasmic segment spans residues 34 to 37 (ETPR). A helical membrane pass occupies residues 38–58 (WAVLTAAIVAAGPAFAAGGEP). Topologically, residues 59–68 (YSGAIRYRGF) are periplasmic. Residues 69-89 (LRIIGTFIGCIAGLVIIIAMI) traverse the membrane as a helical segment. Residues 90–92 (RAP) are Cytoplasmic-facing. Residues 93-113 (LLMILVCCIWAGFCTWISSLV) form a helical membrane-spanning segment. Residues 114-120 (RIENSYA) lie on the Periplasmic side of the membrane. A helical membrane pass occupies residues 121-141 (WGLAGYTALIIVITIQPEPLL). Residues 142–151 (TPQFAVERCS) lie on the Cytoplasmic side of the membrane. The chain crosses the membrane as a helical span at residues 152–172 (EIVIGIVCAIMADLLFSPRSI). Topologically, residues 173–369 (KQEVDRELES…RTTLSCILGT (197 aa)) are periplasmic. A helical transmembrane segment spans residues 370–390 (LFWLWTGWTSGSGAMVMIAVV). Topologically, residues 391-406 (TSLAMRLPNPRMVAID) are cytoplasmic. The helical transmembrane segment at 407–427 (FIYGTLAALPLGLLYFLVIIP) threads the bilayer. Residues 428-430 (NTQ) are Periplasmic-facing. The helical transmembrane segment at 431 to 451 (QSMLLLCISLAVLGFFLGIEV) threads the bilayer. The Cytoplasmic portion of the chain corresponds to 452–458 (QKRRLGS). The helical transmembrane segment at 459-479 (MGALASTINIIVLDNPMTFHF) threads the bilayer. Topologically, residues 480–481 (SQ) are periplasmic. The helical transmembrane segment at 482–502 (FLDSALGQIVGCVLAFTVILL) threads the bilayer. Over 503–655 (VRDKSRDRTG…HKYQHALTDS (153 aa)) the chain is Cytoplasmic.

It belongs to the aromatic acid exporter ArAE (TC 2.A.85) family.

The protein resides in the cell inner membrane. Forms an efflux pump with AaeA. Could function as a metabolic relief valve, allowing to eliminate certain compounds when they accumulate to high levels in the cell. This Shigella flexneri protein is p-hydroxybenzoic acid efflux pump subunit AaeB.